Here is a 123-residue protein sequence, read N- to C-terminus: Fluoride-specific ion channel FluC (123 aa).

The next 4 helical transmembrane spans lie at 7 to 27 (LLLIIGGGLGALARYYISGIL), 39 to 59 (LVNSIASFILGYLYGLLFFGF), 67 to 87 (IFLGTGFCGGLSTFSTFSYET), and 100 to 120 (FMNVVANVLVTITLVFLGFIL). Na(+)-binding residues include Gly75 and Ser78.

It belongs to the fluoride channel Fluc/FEX (TC 1.A.43) family.

The protein localises to the cell membrane. The catalysed reaction is fluoride(in) = fluoride(out). Its activity is regulated as follows. Na(+) is not transported, but it plays an essential structural role and its presence is essential for fluoride channel function. Its function is as follows. Fluoride-specific ion channel. Important for reducing fluoride concentration in the cell, thus reducing its toxicity. This is Fluoride-specific ion channel FluC from Pyrococcus abyssi (strain GE5 / Orsay).